The chain runs to 118 residues: Large ribosomal subunit protein bL20 (118 aa).

This sequence belongs to the bacterial ribosomal protein bL20 family.

Functionally, binds directly to 23S ribosomal RNA and is necessary for the in vitro assembly process of the 50S ribosomal subunit. It is not involved in the protein synthesizing functions of that subunit. The protein is Large ribosomal subunit protein bL20 of Lachnoclostridium phytofermentans (strain ATCC 700394 / DSM 18823 / ISDg) (Clostridium phytofermentans).